Consider the following 562-residue polypeptide: Cytosolic invertase 1 (562 aa).

The protein belongs to the glycosyl hydrolase 100 family.

It is found in the cytoplasm. The protein resides in the cytosol. It catalyses the reaction Hydrolysis of terminal non-reducing beta-D-fructofuranoside residues in beta-D-fructofuranosides.. In terms of biological role, cytosolic invertase that cleaves sucrose into glucose and fructose and is involved in the regulation of primary root elongation, lateral root formation, floral transition and pollen development. This Oryza sativa subsp. japonica (Rice) protein is Cytosolic invertase 1.